Consider the following 135-residue polypeptide: Class I hydrophobin 2 (135 aa).

The signal sequence occupies residues 1-20 (MFARLTSTLFALAAVSAVFA). Cystine bridges form between C29–C114, C36–C107, C37–C73, and C115–C128. Residues N117 and N132 are each glycosylated (N-linked (GlcNAc...) asparagine).

Belongs to the fungal hydrophobin family. Self-assembles to form functional amyloid fibrils called rodlets. Self-assembly into fibrillar rodlets occurs spontaneously at hydrophobic:hydrophilic interfaces and the rodlets further associate laterally to form amphipathic monolayers.

Its subcellular location is the secreted. The protein localises to the cell wall. Aerial growth, conidiation, and dispersal of filamentous fungi in the environment rely upon a capability of their secreting small amphipathic proteins called hydrophobins (HPBs) with low sequence identity. Class I can self-assemble into an outermost layer of rodlet bundles on aerial cell surfaces, conferring cellular hydrophobicity that supports fungal growth, development and dispersal; whereas Class II form highly ordered films at water-air interfaces through intermolecular interactions but contribute nothing to the rodlet structure. The polypeptide is Class I hydrophobin 2 (Coprinopsis cinerea (strain Okayama-7 / 130 / ATCC MYA-4618 / FGSC 9003) (Inky cap fungus)).